The primary structure comprises 585 residues: MAGUK p55 subfamily member 3 (585 aa).

2 consecutive L27 domains span residues 6 to 60 (EDSG…ERQS) and 61 to 118 (PTPV…FDPV). In terms of domain architecture, PDZ spans 137 to 212 (IVRLVKNKEP…LAQSQGSITL (76 aa)). Positions 226 to 296 (ESKVFMRALF…PSKGFQERRL (71 aa)) constitute an SH3 domain. The residue at position 307 (Ser-307) is a Phosphoserine. The Guanylate kinase-like domain occupies 385-570 (PRLVVLIGSL…AYSQLKVVLE (186 aa)).

This sequence belongs to the MAGUK family. In terms of assembly, interacts with HTR2C; this interaction stabilizes the receptor at the plasma membrane and prevents the desensitization of the HTR2C receptor-mediated calcium response. Interacts with HTR2A. Interacts with HTR4. Interacts (via PDZ domain) with CADM1 (via C-terminus)Interacts (via PDZ domain) with CADM1; this interaction connects CADM1 with DLG1. Interacts (via Guanylate kinase-like domain) with PALS1. Interacts with DLG1 (via N-terminus); this interaction connects CADM1 with DLG1 and links CADM1 with the regulatory subunit of phosphoinositide-3-kinase (PI3K) by forming a multiprotein complex and participates in cell spreading. Expressed in retina (at protein level) at the subapical region (SAR) adjacent to adherens junctions at the OLM, and at the OPL.

The protein resides in the cell membrane. It is found in the apical cell membrane. The protein localises to the cell junction. Its subcellular location is the adherens junction. In terms of biological role, participates in cell spreading through the phosphoinositide-3-kinase (PI3K) pathway by connecting CADM1 to DLG1 and the regulatory subunit of phosphoinositide-3-kinase (PI3K). Stabilizes HTR2C at the plasma membrane and prevents its desensitization. May participates in the maintenance of adherens junctions. This Homo sapiens (Human) protein is MAGUK p55 subfamily member 3.